We begin with the raw amino-acid sequence, 1465 residues long: DNA polymerase III PolC-type (1465 aa).

An Exonuclease domain is found at 425–581 (YVVFDVETTG…YDAEATGRLL (157 aa)).

This sequence belongs to the DNA polymerase type-C family. PolC subfamily.

The protein localises to the cytoplasm. The catalysed reaction is DNA(n) + a 2'-deoxyribonucleoside 5'-triphosphate = DNA(n+1) + diphosphate. Its function is as follows. Required for replicative DNA synthesis. This DNA polymerase also exhibits 3' to 5' exonuclease activity. The polypeptide is DNA polymerase III PolC-type (Streptococcus mutans serotype c (strain ATCC 700610 / UA159)).